A 355-amino-acid chain; its full sequence is uncharacterized protein (355 aa).

Disordered stretches follow at residues 1-121, 226-253, and 336-355; these read MPID…MELR, RLMN…KSSM, and NLHR…RKRT. Positions 24–37 are enriched in acidic residues; it reads LESESSSESDYEEV. The span at 65-87 shows a compositional bias: polar residues; the sequence is ETKTSSNFQNINPVQTIDNSASE. Positions 91-105 are enriched in low complexity; sequence DASSAEGGSNSAASS. Residues 106-117 show a composition bias toward acidic residues; the sequence is SEEEDSSDSEYE. The span at 226–245 shows a compositional bias: basic and acidic residues; the sequence is RLMNSEEREAQDLKDAEASR.

This is an uncharacterized protein from Schizosaccharomyces pombe (strain 972 / ATCC 24843) (Fission yeast).